Consider the following 421-residue polypeptide: Serine--tRNA ligase (421 aa).

Residue threonine 225–glutamate 227 coordinates L-serine. ATP-binding positions include arginine 256–glutamate 258 and valine 272. Glutamate 279 is an L-serine binding site. Glutamate 345 to serine 348 is a binding site for ATP. Threonine 380 serves as a coordination point for L-serine.

Belongs to the class-II aminoacyl-tRNA synthetase family. Type-1 seryl-tRNA synthetase subfamily. Homodimer. The tRNA molecule binds across the dimer.

The protein localises to the cytoplasm. The enzyme catalyses tRNA(Ser) + L-serine + ATP = L-seryl-tRNA(Ser) + AMP + diphosphate + H(+). The catalysed reaction is tRNA(Sec) + L-serine + ATP = L-seryl-tRNA(Sec) + AMP + diphosphate + H(+). The protein operates within aminoacyl-tRNA biosynthesis; selenocysteinyl-tRNA(Sec) biosynthesis; L-seryl-tRNA(Sec) from L-serine and tRNA(Sec): step 1/1. Catalyzes the attachment of serine to tRNA(Ser). Is also able to aminoacylate tRNA(Sec) with serine, to form the misacylated tRNA L-seryl-tRNA(Sec), which will be further converted into selenocysteinyl-tRNA(Sec). This chain is Serine--tRNA ligase, found in Thermus thermophilus (strain ATCC 27634 / DSM 579 / HB8).